The primary structure comprises 285 residues: Bifunctional protein FolD (285 aa).

NADP(+)-binding positions include 165–167 (GRS) and Ser-190.

It belongs to the tetrahydrofolate dehydrogenase/cyclohydrolase family. As to quaternary structure, homodimer.

The catalysed reaction is (6R)-5,10-methylene-5,6,7,8-tetrahydrofolate + NADP(+) = (6R)-5,10-methenyltetrahydrofolate + NADPH. It catalyses the reaction (6R)-5,10-methenyltetrahydrofolate + H2O = (6R)-10-formyltetrahydrofolate + H(+). The protein operates within one-carbon metabolism; tetrahydrofolate interconversion. Catalyzes the oxidation of 5,10-methylenetetrahydrofolate to 5,10-methenyltetrahydrofolate and then the hydrolysis of 5,10-methenyltetrahydrofolate to 10-formyltetrahydrofolate. The polypeptide is Bifunctional protein FolD (Staphylococcus saprophyticus subsp. saprophyticus (strain ATCC 15305 / DSM 20229 / NCIMB 8711 / NCTC 7292 / S-41)).